Consider the following 717-residue polypeptide: uncharacterized protein (717 aa).

Residues 19–38 form a helical membrane-spanning segment; the sequence is VFLSTIFVSIIFCLGILFLV.

This sequence to E.coli YtfN.

It localises to the membrane. This is an uncharacterized protein from Buchnera aphidicola subsp. Baizongia pistaciae (strain Bp).